The following is a 99-amino-acid chain: RNA-binding protein Hfq (99 aa).

In terms of domain architecture, Sm spans 10–71 (DLFLNQLRKE…ISSILPSKPI (62 aa)). Residues 77–99 (VQNSQVQNTASQQSNNNQNQESK) are disordered.

The protein belongs to the Hfq family. In terms of assembly, homohexamer.

RNA chaperone that binds small regulatory RNA (sRNAs) and mRNAs to facilitate mRNA translational regulation in response to envelope stress, environmental stress and changes in metabolite concentrations. Also binds with high specificity to tRNAs. The chain is RNA-binding protein Hfq from Caldicellulosiruptor saccharolyticus (strain ATCC 43494 / DSM 8903 / Tp8T 6331).